The sequence spans 167 residues: Peptide deformylase (167 aa).

Fe cation contacts are provided by cysteine 91 and histidine 133. The active site involves glutamate 134. Histidine 137 is a Fe cation binding site.

Belongs to the polypeptide deformylase family. The cofactor is Fe(2+).

The enzyme catalyses N-terminal N-formyl-L-methionyl-[peptide] + H2O = N-terminal L-methionyl-[peptide] + formate. Functionally, removes the formyl group from the N-terminal Met of newly synthesized proteins. Requires at least a dipeptide for an efficient rate of reaction. N-terminal L-methionine is a prerequisite for activity but the enzyme has broad specificity at other positions. This is Peptide deformylase from Nitrosococcus oceani (strain ATCC 19707 / BCRC 17464 / JCM 30415 / NCIMB 11848 / C-107).